A 691-amino-acid chain; its full sequence is Elongation factor G (691 aa).

A tr-type G domain is found at 8-282 (ERVRNIGIAA…AVVDYLPAPV (275 aa)). Residues 17 to 24 (AHIDAGKT), 81 to 85 (DTPGH), and 135 to 138 (NKMD) each bind GTP.

This sequence belongs to the TRAFAC class translation factor GTPase superfamily. Classic translation factor GTPase family. EF-G/EF-2 subfamily.

It localises to the cytoplasm. Catalyzes the GTP-dependent ribosomal translocation step during translation elongation. During this step, the ribosome changes from the pre-translocational (PRE) to the post-translocational (POST) state as the newly formed A-site-bound peptidyl-tRNA and P-site-bound deacylated tRNA move to the P and E sites, respectively. Catalyzes the coordinated movement of the two tRNA molecules, the mRNA and conformational changes in the ribosome. The chain is Elongation factor G from Prochlorococcus marinus (strain MIT 9211).